The following is a 293-amino-acid chain: Nucleotide-binding protein BCG9842_B5683 (293 aa).

Residue 14–21 coordinates ATP; the sequence is GMSGAGKT. 65 to 68 serves as a coordination point for GTP; that stretch reads DLRG.

The protein belongs to the RapZ-like family.

Functionally, displays ATPase and GTPase activities. This Bacillus cereus (strain G9842) protein is Nucleotide-binding protein BCG9842_B5683.